Consider the following 693-residue polypeptide: TGF-beta-activated kinase 1 and MAP3K7-binding protein 2 (693 aa).

A CUE domain is found at 8–51 (IDFQVLHDLRQKFPEVPEVVVSRCMLQNNNNLDACCAVLSQEST). Positions 91 to 130 (GREGSRMNGSRTLTHSISDGQLQGGQSNSELFQQEPQTAP) are disordered. The segment covering 97–130 (MNGSRTLTHSISDGQLQGGQSNSELFQQEPQTAP) has biased composition (polar residues). Arg-173 is modified (asymmetric dimethylarginine). The disordered stretch occupies residues 219-310 (ITTPGGTTRQ…SGSSQSSAHS (92 aa)). Over residues 220–231 (TTPGGTTRQTQQ) the composition is skewed to low complexity. Polar residues predominate over residues 232–282 (HSGWVSQFNPMNPQQVYQPSQPGPWTTCPASNPLSHTSSQQPNQQGHQTSH). Over residues 286-310 (PISSPTTSQPPTIHSSGSSQSSAHS) the composition is skewed to low complexity. Lys-329 is covalently cross-linked (Glycyl lysine isopeptide (Lys-Gly) (interchain with G-Cter in SUMO)). The segment at 330 to 381 (LEPPQRNNSSKLRSSGPRTSSTSSSVNSQTLNRNQPTVYIAASPPNTDELMS) is disordered. A compositionally biased stretch (low complexity) spans 343–359 (SSGPRTSSTSSSVNSQT). Ser-372, Ser-450, Ser-482, and Ser-524 each carry phosphoserine. The stretch at 532 to 619 (YTQALLVHQK…TKEIDLFQAR (88 aa)) forms a coiled coil. Lys-562 participates in a covalent cross-link: Glycyl lysine isopeptide (Lys-Gly) (interchain with G-Cter in SUMO). Phosphoserine is present on Ser-582. Lys-611 is covalently cross-linked (Glycyl lysine isopeptide (Lys-Gly) (interchain with G-Cter in ubiquitin)). Residues 642-663 (PPKPKDQRSIIKTPKTQDTEDD) are disordered. The segment at 663–693 (DEGAQWNCTACTFLNHPALIRCEQCEMPRHF) adopts a RanBP2-type zinc-finger fold. The residue at position 673 (Cys-673) is a (Microbial infection) S-methylcysteine. Residues 675–685 (FLNHPALIRCE) are interaction with polyubiquitin.

As to quaternary structure, interacts with MAP3K7 and TRAF6. Identified in the TRIKA2 complex composed of MAP3K7, TAB1 and TAB2. Binds 'Lys-63'-linked polyubiquitin chains. Interacts with NCOR1 and HDAC3 to form a ternary complex. Interacts (via C-terminal) with NUMBL (via PTB domain). Interacts (via the C-terminus) with DYNC2I2 (via WD domains). Interacts with RBCK1. Interacts with TRIM5. Interacts with TRIM38 (via B30.2/SPRY domain), leading to its translocation to lysosomes and degradation. Interacts with ASB1; this interaction promotes TAB2 stability. Degraded in a lysosome-dependent manner following interaction with TRIM38. In terms of processing, SUMOylated by TRIM60; leading to inhibition of MAPK/NF-kappaB activation and the innate immune response. Post-translationally, ubiquitinated; following IL1 stimulation or TRAF6 overexpression. Ubiquitination involves RBCK1 leading to proteasomal degradation. Ubiquitinated at Lys-611 by TRIM45 leading to proteasomal degradation. Phosphorylated. In terms of processing, (Microbial infection) Methylated at Cys-673 by enteropathogenic E.coli protein NleE or S.flexneri protein OspZ: methylation disrupts zinc-binding and ability to bind 'Lys-63'-linked ubiquitin, leading to NF-kappa-B inactivation. In terms of tissue distribution, widely expressed. In the embryo, expressed in the ventricular trabeculae, endothelial cells of the conotruncal cushions of the outflow tract and in the endothelial cells lining the developing aortic valves.

It localises to the membrane. The protein localises to the endosome membrane. It is found in the lysosome membrane. The protein resides in the cytoplasm. Its subcellular location is the cytosol. Its function is as follows. Adapter required to activate the JNK and NF-kappa-B signaling pathways through the specific recognition of 'Lys-63'-linked polyubiquitin chains by its RanBP2-type zinc finger (NZF). Acts as an adapter linking MAP3K7/TAK1 and TRAF6 to 'Lys-63'-linked polyubiquitin chains. The RanBP2-type zinc finger (NZF) specifically recognizes Lys-63'-linked polyubiquitin chains unanchored or anchored to the substrate proteins such as RIPK1/RIP1 and RIPK2: this acts as a scaffold to organize a large signaling complex to promote autophosphorylation of MAP3K7/TAK1, and subsequent activation of I-kappa-B-kinase (IKK) core complex by MAP3K7/TAK1. Also recognizes and binds Lys-63'-linked polyubiquitin chains of heterotypic 'Lys-63'-/'Lys-48'-linked branched ubiquitin chains. Regulates the IL1-mediated translocation of NCOR1 out of the nucleus. Involved in heart development. This chain is TGF-beta-activated kinase 1 and MAP3K7-binding protein 2, found in Homo sapiens (Human).